We begin with the raw amino-acid sequence, 461 residues long: Serine/threonine-protein kinase 4 homolog A (461 aa).

The Protein kinase domain occupies 20–273; it reads FTIVEKLGEG…AEELLKHPFI (254 aa). ATP-binding positions include 26–34 and lysine 49; that span reads LGEGSYGSV. Residue aspartate 139 is the Proton acceptor of the active site. A Phosphothreonine; by autocatalysis modification is found at threonine 173. 2 disordered regions span residues 303–349 and 369–388; these read GIEQ…EEYD and NDDEDSGTMKLKNTMPSNKK. Residues 307 to 322 show a composition bias toward acidic residues; that stretch reads RDEEEEDEDEDSEDSD. The region spanning 411-458 is the SARAH domain; that stretch reads SDKYSSYSLEELKKMLAELEIEREKEVQKTLEKFSINRQALLAVIDEK.

Belongs to the protein kinase superfamily. STE Ser/Thr protein kinase family. STE20 subfamily. Mn(2+) serves as cofactor. Undergoes autophosphorylation in the catalytic domain.

It localises to the cytoplasm. It is found in the cytosol. The enzyme catalyses L-seryl-[protein] + ATP = O-phospho-L-seryl-[protein] + ADP + H(+). It carries out the reaction L-threonyl-[protein] + ATP = O-phospho-L-threonyl-[protein] + ADP + H(+). In terms of biological role, regulates both cAMP signaling during early development and the stress response. Functions as an activator of adenylylcyclase. The polypeptide is Serine/threonine-protein kinase 4 homolog A (krsA) (Dictyostelium discoideum (Social amoeba)).